Here is a 290-residue protein sequence, read N- to C-terminus: Arylamine N-acetyltransferase 2 (290 aa).

Cys-68 (acyl-thioester intermediate) is an active-site residue. Positions 103 and 104 each coordinate CoA. Ile-106–His-107 lines the substrate pocket. Active-site residues include His-107 and Asp-122. Residues Tyr-208, Thr-214, and Ser-287 each contribute to the CoA site.

This sequence belongs to the arylamine N-acetyltransferase family.

Its subcellular location is the cytoplasm. The catalysed reaction is an arylamine + acetyl-CoA = an N-acetylarylamine + CoA. It carries out the reaction an N-hydroxyarylamine + acetyl-CoA = an N-acetoxyarylamine + CoA. In terms of biological role, catalyzes the N- or O-acetylation of various arylamine and heterocyclic amine substrates, and participates in the detoxification of a plethora of hydrazine and arylamine drugs. This Macaca mulatta (Rhesus macaque) protein is Arylamine N-acetyltransferase 2 (NAT2).